Reading from the N-terminus, the 347-residue chain is Ribosomal RNA small subunit methyltransferase H (347 aa).

S-adenosyl-L-methionine is bound by residues 47–49 (GGY), Asp64, Phe91, Asp114, and Gln121. The disordered stretch occupies residues 291 to 347 (PAVKGAVGPTAEEEERNPRARSAKLRAGIRTENPPLEDDLSLFGLPKLPETNELARS).

Belongs to the methyltransferase superfamily. RsmH family.

It is found in the cytoplasm. The catalysed reaction is cytidine(1402) in 16S rRNA + S-adenosyl-L-methionine = N(4)-methylcytidine(1402) in 16S rRNA + S-adenosyl-L-homocysteine + H(+). Functionally, specifically methylates the N4 position of cytidine in position 1402 (C1402) of 16S rRNA. In Brucella anthropi (strain ATCC 49188 / DSM 6882 / CCUG 24695 / JCM 21032 / LMG 3331 / NBRC 15819 / NCTC 12168 / Alc 37) (Ochrobactrum anthropi), this protein is Ribosomal RNA small subunit methyltransferase H.